Here is a 30-residue protein sequence, read N- to C-terminus: Pyrrole-2-carboxylate oxygenase (30 aa).

In terms of assembly, homotrimer. Requires FAD as cofactor.

The catalysed reaction is pyrrole-2-carboxylate + NADH + O2 + H(+) = 5-hydroxypyrrole-2-carboxylate + NAD(+) + H2O. In terms of biological role, monooxygenase that initiates the degradation of pyrrole-2-carboxylate, which allows Arthrobacter sp. strain Py1 to grow on pyrrole-2-carboxylate as sole carbon, nitrogen, and energy source. To a lesser extent, can also use pyrrole, pyrrole-2-aldehyde, and indole-2-carboxylate as substrate. This chain is Pyrrole-2-carboxylate oxygenase, found in Arthrobacter sp. (strain Py1).